The sequence spans 458 residues: V-type sodium ATPase subunit B (458 aa).

Belongs to the ATPase alpha/beta chains family.

In terms of biological role, involved in ATP-driven sodium extrusion. This is V-type sodium ATPase subunit B (ntpB) from Enterococcus hirae (strain ATCC 9790 / DSM 20160 / JCM 8729 / LMG 6399 / NBRC 3181 / NCIMB 6459 / NCDO 1258 / NCTC 12367 / WDCM 00089 / R).